The primary structure comprises 169 residues: Sec-independent protein translocase protein TatB (169 aa).

Residues 2-22 (SPGIGMPELLVVLVLALVVVG) traverse the membrane as a helical segment. A disordered region spans residues 106–169 (NQAETDADKA…AKPVDEIKGR (64 aa)).

It belongs to the TatB family. In terms of assembly, the Tat system comprises two distinct complexes: a TatABC complex, containing multiple copies of TatA, TatB and TatC subunits, and a separate TatA complex, containing only TatA subunits. Substrates initially bind to the TatABC complex, which probably triggers association of the separate TatA complex to form the active translocon.

It is found in the cell inner membrane. Its function is as follows. Part of the twin-arginine translocation (Tat) system that transports large folded proteins containing a characteristic twin-arginine motif in their signal peptide across membranes. Together with TatC, TatB is part of a receptor directly interacting with Tat signal peptides. TatB may form an oligomeric binding site that transiently accommodates folded Tat precursor proteins before their translocation. The protein is Sec-independent protein translocase protein TatB of Maricaulis maris (strain MCS10) (Caulobacter maris).